The following is a 490-amino-acid chain: Aspartyl/glutamyl-tRNA(Asn/Gln) amidotransferase subunit B (490 aa).

The protein belongs to the GatB/GatE family. GatB subfamily. As to quaternary structure, heterotrimer of A, B and C subunits.

It catalyses the reaction L-glutamyl-tRNA(Gln) + L-glutamine + ATP + H2O = L-glutaminyl-tRNA(Gln) + L-glutamate + ADP + phosphate + H(+). The catalysed reaction is L-aspartyl-tRNA(Asn) + L-glutamine + ATP + H2O = L-asparaginyl-tRNA(Asn) + L-glutamate + ADP + phosphate + 2 H(+). Its function is as follows. Allows the formation of correctly charged Asn-tRNA(Asn) or Gln-tRNA(Gln) through the transamidation of misacylated Asp-tRNA(Asn) or Glu-tRNA(Gln) in organisms which lack either or both of asparaginyl-tRNA or glutaminyl-tRNA synthetases. The reaction takes place in the presence of glutamine and ATP through an activated phospho-Asp-tRNA(Asn) or phospho-Glu-tRNA(Gln). The protein is Aspartyl/glutamyl-tRNA(Asn/Gln) amidotransferase subunit B of Methylorubrum populi (strain ATCC BAA-705 / NCIMB 13946 / BJ001) (Methylobacterium populi).